A 516-amino-acid polypeptide reads, in one-letter code: Protein phosphatase 1H (516 aa).

2 disordered regions span residues 102–122 (ADPS…PSGD) and 181–202 (PPTC…SGSQ). Residues 106–506 (SVSYTPSRRR…DDISVFIIPL (401 aa)) form the PPM-type phosphatase domain. The segment covering 190 to 202 (PNPQLHASASGSQ) has biased composition (polar residues).

The protein belongs to the PP2C family.

Its subcellular location is the nucleus. The protein localises to the cytoplasm. The catalysed reaction is O-phospho-L-seryl-[protein] + H2O = L-seryl-[protein] + phosphate. The enzyme catalyses O-phospho-L-threonyl-[protein] + H2O = L-threonyl-[protein] + phosphate. This chain is Protein phosphatase 1H (ppm1h), found in Danio rerio (Zebrafish).